The sequence spans 298 residues: Nucleotide-binding protein Csal_2229 (298 aa).

8–15 (GRSGSGKS) provides a ligand contact to ATP. 59–62 (DARN) contributes to the GTP binding site.

Belongs to the RapZ-like family.

Displays ATPase and GTPase activities. The polypeptide is Nucleotide-binding protein Csal_2229 (Chromohalobacter salexigens (strain ATCC BAA-138 / DSM 3043 / CIP 106854 / NCIMB 13768 / 1H11)).